The sequence spans 123 residues: Phospholipase A2 (123 aa).

7 disulfide bridges follow: C11/C77, C27/C123, C29/C45, C44/C105, C51/C98, C61/C91, and C84/C96. Y28, G30, and G32 together coordinate Ca(2+). Residue H48 is part of the active site. D49 provides a ligand contact to Ca(2+). The active site involves D99.

This sequence belongs to the phospholipase A2 family. Monomer or homodimer. Ca(2+) is required as a cofactor. In terms of processing, activated by trypsin cleavage in the duodenum. Can also be activated by thrombin or autocatalytically.

It is found in the secreted. The enzyme catalyses a 1,2-diacyl-sn-glycero-3-phosphocholine + H2O = a 1-acyl-sn-glycero-3-phosphocholine + a fatty acid + H(+). The catalysed reaction is 1,2-ditetradecanoyl-sn-glycero-3-phosphocholine + H2O = 1-tetradecanoyl-sn-glycero-3-phosphocholine + tetradecanoate + H(+). It catalyses the reaction 1,2-dihexadecanoyl-sn-glycero-3-phosphocholine + H2O = 1-hexadecanoyl-sn-glycero-3-phosphocholine + hexadecanoate + H(+). It carries out the reaction 1-hexadecanoyl-2-(9Z-octadecenoyl)-sn-glycero-3-phosphocholine + H2O = 1-hexadecanoyl-sn-glycero-3-phosphocholine + (9Z)-octadecenoate + H(+). The enzyme catalyses 1-hexadecanoyl-2-(5Z,8Z,11Z,14Z-eicosatetraenoyl)-sn-glycero-3-phosphocholine + H2O = 1-hexadecanoyl-sn-glycero-3-phosphocholine + (5Z,8Z,11Z,14Z)-eicosatetraenoate + H(+). The catalysed reaction is 1-hexadecanoyl-2-(9Z-octadecenoyl)-sn-glycero-3-phospho-(1'-sn-glycerol) + H2O = 1-hexadecanoyl-sn-glycero-3-phospho-(1'-sn-glycerol) + (9Z)-octadecenoate + H(+). It catalyses the reaction N-hexadecanoyl-1,2-di-(9Z-octadecenoyl)-sn-glycero-3-phosphoethanolamine + H2O = N-hexadecanoyl-1-(9Z-octadecenoyl)-sn-glycero-3-phosphoethanolamine + (9Z)-octadecenoate + H(+). It carries out the reaction 1-hexadecanoyl-2-(9Z,12Z-octadecadienoyl)-sn-glycero-3-phosphoethanolamine + H2O = 1-hexadecanoyl-sn-glycero-3-phosphoethanolamine + (9Z,12Z)-octadecadienoate + H(+). The enzyme catalyses N,1-dihexadecanoyl-2-(9Z,12Z-octadecadienoyl)-sn-glycero-3-phosphoethanolamine + H2O = N,1-dihexadecanoyl-sn-glycero-3-phosphoethanolamine + (9Z,12Z)-octadecadienoate + H(+). Its function is as follows. Secretory calcium-dependent phospholipase A2 that primarily targets dietary phospholipids in the intestinal tract. Hydrolyzes the ester bond of the fatty acyl group attached at sn-2 position of phospholipids (phospholipase A2 activity) with preference for phosphatidylethanolamines and phosphatidylglycerols over phosphatidylcholines. May play a role in the biosynthesis of N-acyl ethanolamines that regulate energy metabolism and inflammation in the intestinal tract. Hydrolyzes N-acyl phosphatidylethanolamines to N-acyl lysophosphatidylethanolamines, which are further cleaved by a lysophospholipase D to release N-acyl ethanolamines. May act in an autocrine and paracrine manner. Has anti-helminth activity in a process regulated by gut microbiota. Upon helminth infection of intestinal epithelia, directly affects phosphatidylethanolamine contents in the membrane of helminth larvae, likely controlling an array of phospholipid-mediated cellular processes such as membrane fusion and cell division while providing for better immune recognition, ultimately reducing larvae integrity and infectivity. The sequence is that of Phospholipase A2 (PLA2G1B) from Ovis aries (Sheep).